The following is a 311-amino-acid chain: Ribonuclease HIII (311 aa).

The RNase H type-2 domain occupies 95–311 (MSIVGSDEVG…NTEKALRLLR (217 aa)). A divalent metal cation-binding residues include Asp101, Glu102, and Asp206.

The protein belongs to the RNase HII family. RnhC subfamily. Requires Mn(2+) as cofactor. Mg(2+) serves as cofactor.

It localises to the cytoplasm. It carries out the reaction Endonucleolytic cleavage to 5'-phosphomonoester.. Its function is as follows. Endonuclease that specifically degrades the RNA of RNA-DNA hybrids. The protein is Ribonuclease HIII of Bacillus cereus (strain ATCC 14579 / DSM 31 / CCUG 7414 / JCM 2152 / NBRC 15305 / NCIMB 9373 / NCTC 2599 / NRRL B-3711).